Consider the following 151-residue polypeptide: MKNKLLFMMLTILGAPGIAAAAGYDLANSEYNFAVNELSKSSFNQAAIIGQAGTNNSAQLRQGGSKLLAVVAQEGSSNRAKIDQTGDYNLAYIDQAGSANDASISQGAYGNTAMIIQKGSGNKANITQYGTQKTAIVVQRQSQMAIRVTQR.

Residues 1–21 (MKNKLLFMMLTILGAPGIAAA) form the signal peptide.

This sequence belongs to the CsgA/CsgB family.

The protein resides in the fimbrium. In terms of biological role, curlin is the structural subunit of the curli. Curli are coiled surface structures that assemble preferentially at growth temperatures below 37 degrees Celsius. Curli can bind to fibronectin. The minor subunit is the nucleation component of curlin monomers. The sequence is that of Minor curlin subunit (csgB) from Escherichia coli O157:H7.